The chain runs to 432 residues: Glutamyl-tRNA reductase (432 aa).

Residues threonine 49–arginine 52, serine 107, glutamate 112–glutamine 114, and glutamine 118 contribute to the substrate site. The active-site Nucleophile is the cysteine 50. Glycine 186–glycine 191 lines the NADP(+) pocket.

It belongs to the glutamyl-tRNA reductase family. As to quaternary structure, homodimer.

It catalyses the reaction (S)-4-amino-5-oxopentanoate + tRNA(Glu) + NADP(+) = L-glutamyl-tRNA(Glu) + NADPH + H(+). It participates in porphyrin-containing compound metabolism; protoporphyrin-IX biosynthesis; 5-aminolevulinate from L-glutamyl-tRNA(Glu): step 1/2. Functionally, catalyzes the NADPH-dependent reduction of glutamyl-tRNA(Glu) to glutamate 1-semialdehyde (GSA). This Campylobacter jejuni subsp. jejuni serotype O:2 (strain ATCC 700819 / NCTC 11168) protein is Glutamyl-tRNA reductase.